The following is a 273-amino-acid chain: SUMO-1 cysteine protease S273R (273 aa).

Active-site residues include His168 and Asn187. Gln226 lines the substrate pocket. The active-site Nucleophile is the Cys232.

It belongs to the peptidase C63 family.

The protein resides in the host cytoplasm. It is found in the virion. In terms of biological role, cysteine protease that plays several role during infection including processing of the structural polyprotein or inhibition of the host immune response. Catalyzes the maturation of the pp220 and pp62 polyprotein precursors into core-shell proteins. Plays a role in the disruption of host pyroptosis via specific cleavage of gasdermin D/GSDMD. In addition, strongly decreases the host cGAS-STING signaling by targeting IKBKE via its enzymatic activity. Also impairs host FOXJ1-mediated antiviral effect via degradation of FOXJ1. In Ornithodoros (relapsing fever ticks), this protein is SUMO-1 cysteine protease S273R.